The primary structure comprises 445 residues: Phosphoglucosamine mutase (445 aa).

The active-site Phosphoserine intermediate is Ser102. 4 residues coordinate Mg(2+): Ser102, Asp241, Asp243, and Asp245. Ser102 is modified (phosphoserine).

It belongs to the phosphohexose mutase family. It depends on Mg(2+) as a cofactor. Post-translationally, activated by phosphorylation.

It carries out the reaction alpha-D-glucosamine 1-phosphate = D-glucosamine 6-phosphate. Functionally, catalyzes the conversion of glucosamine-6-phosphate to glucosamine-1-phosphate. This chain is Phosphoglucosamine mutase, found in Escherichia coli O7:K1 (strain IAI39 / ExPEC).